A 1071-amino-acid polypeptide reads, in one-letter code: ATP-dependent helicase/deoxyribonuclease subunit B (1071 aa).

It belongs to the helicase family. AddB/RexB type 2 subfamily. As to quaternary structure, heterodimer of AddA and RexB. It depends on Mg(2+) as a cofactor.

The heterodimer acts as both an ATP-dependent DNA helicase and an ATP-dependent, dual-direction single-stranded exonuclease. Recognizes the chi site generating a DNA molecule suitable for the initiation of homologous recombination. This subunit has 5' -&gt; 3' nuclease activity but not helicase activity. This Streptococcus pyogenes serotype M49 (strain NZ131) protein is ATP-dependent helicase/deoxyribonuclease subunit B.